Consider the following 1431-residue polypeptide: 1-phosphatidylinositol 4,5-bisphosphate phosphodiesterase beta egl-8 (1431 aa).

The PI-PLC X-box domain maps to 340 to 491 (MDMDQPLCHY…LRKKILIKNK (152 aa)). His355 is a catalytic residue. Residues Asn356, Glu385, and Asp387 each coordinate Ca(2+). His403 is an active-site residue. Residue Glu437 coordinates Ca(2+). Residues Lys489 and Lys491 each coordinate substrate. 2 disordered regions span residues 510–601 (KLDE…MVPD) and 632–692 (RRQS…SGPS). Acidic residues predominate over residues 543 to 556 (EEVDDDTSDDDDDP). 3 stretches are compositionally biased toward low complexity: residues 572–586 (NTTSNNGSNRSARSS), 652–661 (SSSSPATPSI), and 668–692 (ATSSGSTSSITITTTGCSTSSSGPS). The 117-residue stretch at 758–874 (LSSLVNYTHP…GYLLKPDFLR (117 aa)) folds into the PI-PLC Y-box domain. Substrate is bound by residues Ser787 and Arg814. Residues 877-1002 (DRTFDPFSES…SLRSDTNQSF (126 aa)) enclose the C2 domain. 3 disordered regions span residues 1072 to 1119 (QPPR…VAVD), 1150 to 1176 (DLRKKHQKQRDSIQKQQPARRRNSSIA), and 1188 to 1216 (NNRRSTKKEKGSRRSLTASVSSGCGSASG). Residues 1074-1113 (PRQNGSSADLLANNGQTGSARGDQTSSMASSTIRSPNEQP) are compositionally biased toward polar residues. A coiled-coil region spans residues 1135-1166 (KAFAKLLKRFQKELDDLRKKHQKQRDSIQKQQ). Basic and acidic residues predominate over residues 1150–1162 (DLRKKHQKQRDSI). Positions 1191–1200 (RSTKKEKGSR) are enriched in basic residues. The span at 1204-1216 (TASVSSGCGSASG) shows a compositional bias: low complexity. Coiled coils occupy residues 1288-1318 (DEEEFELKKVQLKEQFDLLRKLMSEAQKNQM) and 1368-1402 (EKNLKMFVEERKRLAMKAQKHEEQLTKRHLDQLEQ).

Requires Ca(2+) as cofactor. As to expression, expressed in most or all neurons with high expression in the head and tail ganglia and low expression in the motor neurons of the ventral cord. Expressed in the intestine (at protein level). In males, expressed in vas deferens, spicule protractor muscles, diagonal muscles and a male-specific neuron.

It localises to the perikaryon. Its subcellular location is the cell projection. It is found in the axon. The protein localises to the synapse. The protein resides in the cell junction. It localises to the adherens junction. The enzyme catalyses a 1,2-diacyl-sn-glycero-3-phospho-(1D-myo-inositol-4,5-bisphosphate) + H2O = 1D-myo-inositol 1,4,5-trisphosphate + a 1,2-diacyl-sn-glycerol + H(+). Functionally, mediates the production of the second messenger molecules diacylglycerol (DAG) and inositol 1,4,5-trisphosphate (IP3) which plays an important role in the regulation of intracellular signaling cascades. Required in the nervous system to modulate neuronal activity. Facilitates synaptic transmission at neuromuscular junctions by regulating the release of acetylcholine from the motor neurons and thus affecting locomotion. Plays a role in efficient egg laying and defecation. Involved in axon regeneration after injury. Plays a role in male mating behavior by regulating spicule insertion and sperm transfer. By triggering Ca(2+) transient via IP3-mediated activation of IPR3 receptor itr-1 in ASH sensory neurons, regulates avoidance behavior in response to nose touch. By activating tpa-1 via DAG production, required for the expression of antimicrobial peptide nlp-29 in response to fungal infection. During embryogenesis, may play a role in epidermal morphogenesis together with plc-1. This chain is 1-phosphatidylinositol 4,5-bisphosphate phosphodiesterase beta egl-8, found in Caenorhabditis elegans.